A 344-amino-acid chain; its full sequence is Fructose-1,6-bisphosphatase, cytosolic (344 aa).

Glutamate 71, glutamate 100, aspartate 121, leucine 123, and aspartate 124 together coordinate Mg(2+). Residues 124–127 (DGSS), asparagine 215, tyrosine 247, tyrosine 267, and lysine 277 contribute to the substrate site. Position 283 (glutamate 283) interacts with Mg(2+).

The protein belongs to the FBPase class 1 family. Mg(2+) serves as cofactor.

It localises to the cytoplasm. It carries out the reaction beta-D-fructose 1,6-bisphosphate + H2O = beta-D-fructose 6-phosphate + phosphate. In Oryza coarctata (Wild rice), this protein is Fructose-1,6-bisphosphatase, cytosolic.